A 586-amino-acid chain; its full sequence is Asparagine synthetase [glutamine-hydrolyzing] 2 (586 aa).

Cys2 acts as the For GATase activity in catalysis. One can recognise a Glutamine amidotransferase type-2 domain in the interval 2 to 185 (CGILAVLGCS…PGHLYSSKEK (184 aa)). Residues 50-54 (RLAIV), 75-77 (NGE), and Asp98 each bind L-glutamine. Residues 193-516 (PPWFSEAIPS…PQNSARLSVP (324 aa)) form the Asparagine synthetase domain. Residues Leu231, Val267, and 341 to 342 (SG) each bind ATP.

It carries out the reaction L-aspartate + L-glutamine + ATP + H2O = L-asparagine + L-glutamate + AMP + diphosphate + H(+). The protein operates within amino-acid biosynthesis; L-asparagine biosynthesis; L-asparagine from L-aspartate (L-Gln route): step 1/1. The polypeptide is Asparagine synthetase [glutamine-hydrolyzing] 2 (AS2) (Lotus japonicus (Lotus corniculatus var. japonicus)).